The sequence spans 314 residues: Olfactory receptor 5P81 (314 aa).

The Extracellular segment spans residues methionine 1 to valine 28. An N-linked (GlcNAc...) asparagine glycan is attached at asparagine 8. The chain crosses the membrane as a helical span at residues isoleucine 29–isoleucine 49. Residues leucine 50 to glutamine 57 are Cytoplasmic-facing. The chain crosses the membrane as a helical span at residues leucine 58–serine 78. At serine 79–isoleucine 102 the chain is on the extracellular side. A disulfide bridge links cysteine 100 with cysteine 192. The chain crosses the membrane as a helical span at residues glutamine 103 to tyrosine 123. Residues aspartate 124–serine 136 are Cytoplasmic-facing. Residues threonine 137–isoleucine 157 traverse the membrane as a helical segment. The Extracellular portion of the chain corresponds to histidine 158–isoleucine 199. The chain crosses the membrane as a helical span at residues isoleucine 200–serine 220. At tyrosine 221–alanine 240 the chain is on the cytoplasmic side. A helical membrane pass occupies residues phenylalanine 241–isoleucine 261. Topologically, residues tyrosine 262–asparagine 274 are extracellular. A helical membrane pass occupies residues lysine 275–leucine 295. At arginine 296–phenylalanine 314 the chain is on the cytoplasmic side.

Belongs to the G-protein coupled receptor 1 family.

It localises to the cell membrane. Its function is as follows. Potential odorant receptor. This Mus musculus (Mouse) protein is Olfactory receptor 5P81.